Consider the following 377-residue polypeptide: Transcription initiation factor IIA subunit 1 (377 aa).

Alanine 2 is modified (N-acetylalanine). Composition is skewed to low complexity over residues 69 to 79, 89 to 105, and 248 to 280; these read QVQQQHQPQQQ, QAQP…TQQV, and QAQI…TGDT. Disordered regions lie at residues 69–107 and 248–330; these read QVQQ…QVLI and QAQI…QELF. Serine 281 and serine 282 each carry phosphoserine; by TAF1. Residues 281 to 330 are compositionally biased toward acidic residues; the sequence is SSEEDEDEEEDYDDDEEEDKEKDGAEDGQVEEEPLNSEDDVSDEEGQELF. Phosphoserine occurs at positions 317 and 322. 2 residues coordinate DNA: histidine 344 and arginine 345.

It belongs to the TFIIA subunit 1 family. As to quaternary structure, TFIIA is a heterodimer of the large unprocessed subunit 1 and a small subunit gamma. It was originally believed to be a heterotrimer of an alpha (p35), a beta (p19) and a gamma subunit (p12). TFIIA forms a complex with TBP. Part of TBP-based Pol II pre-initiation complex (PIC), in which Pol II core assembles with general transcription factors and other specific initiation factors including GTF2E1, GTF2E2, GTF2F1, GTF2F2, TCEA1, ERCC2, ERCC3, GTF2H2, GTF2H3, GTF2H4, GTF2H5, GTF2A1, GTF2A2, GTF2B and TBP; this large multi-subunit PIC complex mediates DNA unwinding and targets Pol II core to the transcription start site where the first phosphodiester bond forms. Post-translationally, the alpha and beta subunits are postranslationally produced from the precursor formby TASP1. The cleavage promotes proteasomal degradation.

Its subcellular location is the nucleus. Its function is as follows. TFIIA is a component of the transcription machinery of RNA polymerase II and plays an important role in transcriptional activation. TFIIA in a complex with TBP mediates transcriptional activity. In Rattus norvegicus (Rat), this protein is Transcription initiation factor IIA subunit 1 (Gtf2a1).